The following is a 316-amino-acid chain: Olfactory receptor 6B9 (316 aa).

Residues 1-22 (MENITNISEFILMGFPTAPWLQ) are Extracellular-facing. Asparagine 3 and asparagine 6 each carry an N-linked (GlcNAc...) asparagine glycan. A helical transmembrane segment spans residues 23–43 (ILLFSIFFITYVFVLLENLVI). The Cytoplasmic segment spans residues 44–64 (ILTVWVTGSLHKPMYYFLSTM). The chain crosses the membrane as a helical span at residues 65 to 85 (SFLEAWYISVTVPKMLAGFLF). Topologically, residues 86-97 (RPNTISFLGCMT) are extracellular. Residues cysteine 95 and cysteine 187 are joined by a disulfide bond. Residues 98 to 118 (QLYFFMSLACTECVLLAAMAY) form a helical membrane-spanning segment. Over 119–132 (DRYVAICWPLRYPV) the chain is Cytoplasmic. Residues 133–153 (MMTTGFCVQLTISSWVSGFTI) form a helical membrane-spanning segment. Residues 154 to 199 (SMAKVYFISRVAFCGNNVLNHFFCDVSPILKLACMNLSMAETVDFA) are Extracellular-facing. A helical transmembrane segment spans residues 200-220 (LAIVILIFPLSATVLSYGFIV). The Cytoplasmic segment spans residues 221–237 (STVLQIPSATGQRKAFS). Residues 238 to 258 (TCASHLTVVVIFYTAVIFMYV) form a helical membrane-spanning segment. Over 259 to 269 (RPRAIASFNSN) the chain is Extracellular. A helical membrane pass occupies residues 270-290 (KLISAIYAVFTPMLNPIIYCL). Residues 291 to 316 (RNKEVKDAIRKTIAGGRAPALGESIS) lie on the Cytoplasmic side of the membrane.

The protein belongs to the G-protein coupled receptor 1 family. As to expression, olfactory epithelium.

Its subcellular location is the cell membrane. Its function is as follows. Odorant receptor. In Mus musculus (Mouse), this protein is Olfactory receptor 6B9.